Reading from the N-terminus, the 140-residue chain is Nucleoside diphosphate kinase (140 aa).

Lys11, Phe59, Arg87, Thr93, Arg104, and Asn114 together coordinate ATP. Residue His117 is the Pros-phosphohistidine intermediate of the active site.

It belongs to the NDK family. As to quaternary structure, homotetramer. It depends on Mg(2+) as a cofactor.

The protein resides in the cytoplasm. It catalyses the reaction a 2'-deoxyribonucleoside 5'-diphosphate + ATP = a 2'-deoxyribonucleoside 5'-triphosphate + ADP. It carries out the reaction a ribonucleoside 5'-diphosphate + ATP = a ribonucleoside 5'-triphosphate + ADP. Functionally, major role in the synthesis of nucleoside triphosphates other than ATP. The ATP gamma phosphate is transferred to the NDP beta phosphate via a ping-pong mechanism, using a phosphorylated active-site intermediate. The sequence is that of Nucleoside diphosphate kinase from Jannaschia sp. (strain CCS1).